A 319-amino-acid polypeptide reads, in one-letter code: Cytochrome c biogenesis protein CcsA (319 aa).

The next 8 helical transmembrane spans lie at 9–29, 48–68, 71–91, 98–118, 143–163, 225–245, 258–275, and 286–306; these read ILTHISFSIISIVITIFLISL, TFFCITGLLVTRWIYSGHFPL, LYESLIFLSWSFSVIHMVPYF, LSTITAPSTIFTQGFATSGLL, MILGYAALLCGSLLSVALLVI, IISLGFLFLTIGILSGAVWAN, ETWAFITWTLFAIYLHTR, and AIVASIGFLIIWICYFGVNLL.

This sequence belongs to the CcmF/CycK/Ccl1/NrfE/CcsA family. May interact with Ccs1.

The protein localises to the plastid. It is found in the chloroplast thylakoid membrane. Required during biogenesis of c-type cytochromes (cytochrome c6 and cytochrome f) at the step of heme attachment. This Eucalyptus globulus subsp. globulus (Tasmanian blue gum) protein is Cytochrome c biogenesis protein CcsA.